Consider the following 294-residue polypeptide: 4-hydroxy-tetrahydrodipicolinate synthase (294 aa).

Pyruvate is bound at residue Thr-47. The active-site Proton donor/acceptor is Tyr-135. Lys-163 (schiff-base intermediate with substrate) is an active-site residue. Residue Thr-205 participates in pyruvate binding.

It belongs to the DapA family. Homotetramer; dimer of dimers.

The protein localises to the cytoplasm. It catalyses the reaction L-aspartate 4-semialdehyde + pyruvate = (2S,4S)-4-hydroxy-2,3,4,5-tetrahydrodipicolinate + H2O + H(+). It participates in amino-acid biosynthesis; L-lysine biosynthesis via DAP pathway; (S)-tetrahydrodipicolinate from L-aspartate: step 3/4. Its function is as follows. Catalyzes the condensation of (S)-aspartate-beta-semialdehyde [(S)-ASA] and pyruvate to 4-hydroxy-tetrahydrodipicolinate (HTPA). The sequence is that of 4-hydroxy-tetrahydrodipicolinate synthase from Rickettsia akari (strain Hartford).